The sequence spans 212 residues: Imidazole glycerol phosphate synthase subunit HisH (212 aa).

Positions 3 to 212 (TVAVIDYGMG…QNFAAWDGRW (210 aa)) constitute a Glutamine amidotransferase type-1 domain. Cys81 (nucleophile) is an active-site residue. Residues His190 and Glu192 contribute to the active site.

In terms of assembly, heterodimer of HisH and HisF.

The protein resides in the cytoplasm. The catalysed reaction is 5-[(5-phospho-1-deoxy-D-ribulos-1-ylimino)methylamino]-1-(5-phospho-beta-D-ribosyl)imidazole-4-carboxamide + L-glutamine = D-erythro-1-(imidazol-4-yl)glycerol 3-phosphate + 5-amino-1-(5-phospho-beta-D-ribosyl)imidazole-4-carboxamide + L-glutamate + H(+). It carries out the reaction L-glutamine + H2O = L-glutamate + NH4(+). Its pathway is amino-acid biosynthesis; L-histidine biosynthesis; L-histidine from 5-phospho-alpha-D-ribose 1-diphosphate: step 5/9. IGPS catalyzes the conversion of PRFAR and glutamine to IGP, AICAR and glutamate. The HisH subunit catalyzes the hydrolysis of glutamine to glutamate and ammonia as part of the synthesis of IGP and AICAR. The resulting ammonia molecule is channeled to the active site of HisF. This chain is Imidazole glycerol phosphate synthase subunit HisH, found in Pseudomonas savastanoi pv. phaseolicola (strain 1448A / Race 6) (Pseudomonas syringae pv. phaseolicola (strain 1448A / Race 6)).